A 113-amino-acid polypeptide reads, in one-letter code: Hydrogenase maturation factor HybF (113 aa).

Ni(2+)-binding residues include H2 and E3. 4 residues coordinate Zn(2+): C73, C76, C89, and C92.

The protein belongs to the HypA/HybF family. HybF subfamily.

Involved in the maturation of [NiFe] hydrogenases. Required for nickel insertion into the metal center of the hydrogenase. This is Hydrogenase maturation factor HybF from Proteus vulgaris.